The following is a 352-amino-acid chain: MINYQSIKPWLFKLEPEDAHMLAEAALRIPNVCQVAFNPFLESHFITNSILKQELFGRTFFNPIGLGAGFDKNATMIRAMQILGFGFTEIGTITPKAQAGNPKPRMFRHIEEQSIQNAMGFNNEGLLSAQKRLKKRFPFTTPIGINIGKNKLTPDTQAINDYTTLIKALHELGDYLVINISSPNTPGLRDLQNEEFITKLFEESKAITSKPILLKIAPDMSKEDAVALTKLAVLKGADGIIATNTTVDYSLVKEPKSIGGLSGAVLKEKSFEIFEAVAKELYGKTTLISVGGISSAKEVYRRIKAGASLVQIYSGLIYEGPDLIKNINNELTELIKADGYTNITQAIGADRK.

FMN is bound by residues 68-72 (AGFDK) and Thr92. Lys72 contacts substrate. 117-121 (NAMGF) contacts substrate. 2 residues coordinate FMN: Asn146 and Asn179. Asn179 contacts substrate. The Nucleophile role is filled by Ser182. Position 184 (Asn184) interacts with substrate. 2 residues coordinate FMN: Lys215 and Thr243. 244 to 245 (NT) serves as a coordination point for substrate. FMN-binding positions include Gly263, Gly292, and 313–314 (YS).

The protein belongs to the dihydroorotate dehydrogenase family. Type 2 subfamily. In terms of assembly, monomer. FMN is required as a cofactor.

Its subcellular location is the cell membrane. It catalyses the reaction (S)-dihydroorotate + a quinone = orotate + a quinol. Its pathway is pyrimidine metabolism; UMP biosynthesis via de novo pathway; orotate from (S)-dihydroorotate (quinone route): step 1/1. Its function is as follows. Catalyzes the conversion of dihydroorotate to orotate with quinone as electron acceptor. This is Dihydroorotate dehydrogenase (quinone) from Sulfurimonas denitrificans (strain ATCC 33889 / DSM 1251) (Thiomicrospira denitrificans (strain ATCC 33889 / DSM 1251)).